Consider the following 449-residue polypeptide: Ribosomal protein uS12 methylthiotransferase RimO (449 aa).

One can recognise an MTTase N-terminal domain in the interval glutamine 7–alanine 123. [4Fe-4S] cluster contacts are provided by cysteine 16, cysteine 52, cysteine 86, cysteine 161, cysteine 165, and cysteine 168. The 231-residue stretch at serine 147–arginine 377 folds into the Radical SAM core domain. Residues arginine 380 to glutamate 448 form the TRAM domain.

Belongs to the methylthiotransferase family. RimO subfamily. Requires [4Fe-4S] cluster as cofactor.

Its subcellular location is the cytoplasm. It carries out the reaction L-aspartate(89)-[ribosomal protein uS12]-hydrogen + (sulfur carrier)-SH + AH2 + 2 S-adenosyl-L-methionine = 3-methylsulfanyl-L-aspartate(89)-[ribosomal protein uS12]-hydrogen + (sulfur carrier)-H + 5'-deoxyadenosine + L-methionine + A + S-adenosyl-L-homocysteine + 2 H(+). Catalyzes the methylthiolation of an aspartic acid residue of ribosomal protein uS12. The chain is Ribosomal protein uS12 methylthiotransferase RimO from Trichlorobacter lovleyi (strain ATCC BAA-1151 / DSM 17278 / SZ) (Geobacter lovleyi).